We begin with the raw amino-acid sequence, 1363 residues long: Homeobox protein 13 (1363 aa).

The stretch at 15 to 73 forms a coiled coil; the sequence is FVMEQIQQQQQQQQQQQQQQQQQQQQQQQQQQQQLQQQQQQQQQQQQQQQQQQQQQQQN. Disordered stretches follow at residues 66–96, 120–177, 308–437, 621–731, 765–818, 857–911, 1001–1137, 1166–1202, and 1270–1341; these read QQQQQQQNPKMNNQPNETRLPSPPLLNSTVP, SQHA…INGS, INGT…YHGG, LNSP…QHQQ, HHHH…PQHS, SINS…SNSI, QNYN…TLIN, NFINNNSNNNNNMEIDDDDEDGIDGIEGEDDSKKRMR, and ISFG…TLIS. Residues 73-96 are compositionally biased toward polar residues; that stretch reads NPKMNNQPNETRLPSPPLLNSTVP. Residues 132–147 are compositionally biased toward low complexity; the sequence is SLNSSNNNNNNNFNNS. The segment covering 148 to 158 has biased composition (polar residues); the sequence is RPTFSSCSGNS. Composition is skewed to low complexity over residues 159–177 and 315–326; these read NNTTTTTTTTTTTNPINGS and SNHSNNNNNNNN. Basic residues predominate over residues 327–339; that stretch reads NHHHHHHHHHQKR. Residues 348–378 show a composition bias toward low complexity; that stretch reads TNHLTPLPLLHKHTNNNNNINNNNNHNHNNI. The segment covering 379–393 has biased composition (polar residues); that stretch reads LGSPNQLNRSQDFTS. 5 stretches are compositionally biased toward low complexity: residues 394–408, 415–426, 641–693, 709–731, and 770–793; these read KNNNINNNNNNNNKI, NKGSPNQNSSEN, NNNS…NNNI, HHQQQLQHQQHQQQQLLHQQHQQ, and QQQQQQQQQQQHNNNNNNNNSNHN. Residues 738-789 are a coiled coil; the sequence is QQQLQIQYQQQQTHNNNLNQTQQLYYNHHHHQQQQQQQQQQQQHNNNNNNNN. Composition is skewed to polar residues over residues 794–818 and 857–883; these read SVLTSPPLSQFPKTPLQLSQTPQHS and SINSNSGMSLPMISSPSPNLSHMQKNR. Low complexity-rich tracts occupy residues 889-911, 1001-1031, and 1045-1063; these read ILNSSLSSSNTTNSATTSSSNSI, QNYNENNNNNNNNNNNNYNINNINNNNNNNF, and NINNNNNNNNNNNNNNNNN. A compositionally biased stretch (basic and acidic residues) spans 1064 to 1078; it reads KNDKNESEFESKEKL. The segment covering 1081–1095 has biased composition (polar residues); that stretch reads PFGSSIPNIVNNEQL. Composition is skewed to low complexity over residues 1096–1116, 1123–1137, and 1166–1177; these read SPYSQQSLSSSSSENPSPQWS, TSSSKLSNSTSTLIN, and NFINNNSNNNNN. Residues 1179-1195 show a composition bias toward acidic residues; the sequence is EIDDDDEDGIDGIEGED. The homeobox DNA-binding region spans 1198–1261; the sequence is KKRMRKTTRP…NRRTKDKLKN (64 aa). Over residues 1275–1294 the composition is skewed to low complexity; that stretch reads SSTSSTQTSTNSPSSQLSPL. Over residues 1297-1316 the composition is skewed to polar residues; that stretch reads NMNNNDQQSISTPSLILSQI. Residues 1317–1334 show a composition bias toward low complexity; sequence NNNQNNNQNNNNNNNTNN.

The protein localises to the nucleus. Its function is as follows. Putative transcription factor. The protein is Homeobox protein 13 (hbx13) of Dictyostelium discoideum (Social amoeba).